The chain runs to 77 residues: Large ribosomal subunit protein uL24 (77 aa).

The disordered stretch occupies residues 42-61 (KKHQKPSQTNANGGVVESEG).

Belongs to the universal ribosomal protein uL24 family. In terms of assembly, part of the 50S ribosomal subunit.

In terms of biological role, one of two assembly initiator proteins, it binds directly to the 5'-end of the 23S rRNA, where it nucleates assembly of the 50S subunit. Its function is as follows. One of the proteins that surrounds the polypeptide exit tunnel on the outside of the subunit. This chain is Large ribosomal subunit protein uL24, found in Lactobacillus helveticus (strain DPC 4571).